Consider the following 79-residue polypeptide: Conotoxin Tr6.2 (79 aa).

The first 22 residues, 1-22 (MKLTCVLIISVLFLTASQLITA), serve as a signal peptide directing secretion. A propeptide spanning residues 23 to 47 (VYSRDKQQYRAARLRDEMRNLKGAR) is cleaved from the precursor. Disulfide bonds link C49-C62, C56-C67, and C61-C77. 4-hydroxyproline is present on residues P60 and P63.

The protein belongs to the conotoxin O1 superfamily. Expressed by the venom duct.

It localises to the secreted. Functionally, ion channel inhibitor that inhibits the increase in intracellular calcium upon depolarization in DRG neurons. In vivo, both intraperitoneal and intracranial injections into mice induce hyperactivity. This chain is Conotoxin Tr6.2, found in Conus terebra (Sea snail).